The primary structure comprises 430 residues: Enolase (430 aa).

Q163 lines the (2R)-2-phosphoglycerate pocket. The active-site Proton donor is E205. Mg(2+) is bound by residues D242, E287, and D314. (2R)-2-phosphoglycerate-binding residues include K339, R368, S369, and K390. K339 acts as the Proton acceptor in catalysis.

It belongs to the enolase family. Requires Mg(2+) as cofactor.

The protein localises to the cytoplasm. Its subcellular location is the secreted. It is found in the cell surface. It carries out the reaction (2R)-2-phosphoglycerate = phosphoenolpyruvate + H2O. It participates in carbohydrate degradation; glycolysis; pyruvate from D-glyceraldehyde 3-phosphate: step 4/5. Catalyzes the reversible conversion of 2-phosphoglycerate (2-PG) into phosphoenolpyruvate (PEP). It is essential for the degradation of carbohydrates via glycolysis. This is Enolase from Exiguobacterium sibiricum (strain DSM 17290 / CCUG 55495 / CIP 109462 / JCM 13490 / 255-15).